The sequence spans 387 residues: F420-dependent formate dehydrogenase 1 subunit beta (387 aa).

2 4Fe-4S ferredoxin-type domains span residues 275-298 (TIEE…VCPV) and 326-355 (VRMS…ARIF). 8 residues coordinate [4Fe-4S] cluster: C286, C289, C292, C296, C335, C338, C341, and C345. Residues 366–387 (LGYRPGVDDEAPPALGGSCPTQ) are disordered.

This sequence belongs to the FrhB family. Dimer of an alpha (FdhA1) and a beta (FdhB1) subunit. [4Fe-4S] cluster serves as cofactor. It depends on FAD as a cofactor. The cofactor is Zn(2+).

The catalysed reaction is oxidized coenzyme F420-(gamma-L-Glu)(n) + formate + 2 H(+) = reduced coenzyme F420-(gamma-L-Glu)(n) + CO2. Its function is as follows. Catalyzes the oxidation of formate to carbon dioxide, with coenzyme F420 as the electron acceptor. In vitro can also use methyl viologen as electron acceptor. The protein is F420-dependent formate dehydrogenase 1 subunit beta of Methanococcus maripaludis (strain DSM 14266 / JCM 13030 / NBRC 101832 / S2 / LL).